The sequence spans 201 residues: Ephrin-A4 (201 aa).

The N-terminal stretch at 1 to 25 (MRLLPLLRTVLWAAFLGSPLRGGSS) is a signal peptide. One can recognise an Ephrin RBD domain in the interval 26 to 155 (LRHVVYWNSS…RLQVSVCCKE (130 aa)). N-linked (GlcNAc...) asparagine glycosylation occurs at asparagine 33. 2 disulfide bridges follow: cysteine 58–cysteine 99 and cysteine 86–cysteine 144. The GPI-anchor amidated serine moiety is linked to residue serine 170. Positions 171 to 201 (GTSGWRGGDTPSPLCLLLLLLLLILRLLRIL) are cleaved as a propeptide — removed in mature form.

Belongs to the ephrin family. As to expression, expressed in the adult spleen, lymph node, prostate, ovary, small intestine, and colon, and in fetal heart, lung, liver and kidney. Also detected in hematopoietic cell lines.

The protein localises to the cell membrane. The protein resides in the secreted. Cell surface GPI-bound ligand for Eph receptors, a family of receptor tyrosine kinases which are crucial for migration, repulsion and adhesion during neuronal, vascular and epithelial development. Binds promiscuously Eph receptors residing on adjacent cells, leading to contact-dependent bidirectional signaling into neighboring cells. May play a role in the interaction between activated B-lymphocytes and dendritic cells in tonsils. The sequence is that of Ephrin-A4 (EFNA4) from Homo sapiens (Human).